A 122-amino-acid polypeptide reads, in one-letter code: MARIAGVNIPTNKRVEIALRYIHGIGPSFSKEICEKVGVEPSRRVNQLTDAEVIKIREAIDAGYMVEGDLRRDTSMNIKRLMDLGCYRGLRHRKKLPVRGQRTHTNARTRKGPAKPIAGKKK.

A disordered region spans residues 94-122; it reads KKLPVRGQRTHTNARTRKGPAKPIAGKKK.

It belongs to the universal ribosomal protein uS13 family. As to quaternary structure, part of the 30S ribosomal subunit. Forms a loose heterodimer with protein S19. Forms two bridges to the 50S subunit in the 70S ribosome.

Its function is as follows. Located at the top of the head of the 30S subunit, it contacts several helices of the 16S rRNA. In the 70S ribosome it contacts the 23S rRNA (bridge B1a) and protein L5 of the 50S subunit (bridge B1b), connecting the 2 subunits; these bridges are implicated in subunit movement. Contacts the tRNAs in the A and P-sites. The protein is Small ribosomal subunit protein uS13 of Hyphomonas neptunium (strain ATCC 15444).